A 469-amino-acid polypeptide reads, in one-letter code: Ribulose bisphosphate carboxylase large chain (469 aa).

An N6,N6,N6-trimethyllysine modification is found at lysine 8. Substrate contacts are provided by asparagine 117 and threonine 167. The active-site Proton acceptor is the lysine 169. Residue lysine 171 participates in substrate binding. Mg(2+)-binding residues include lysine 195, aspartate 197, and glutamate 198. Lysine 195 carries the post-translational modification N6-carboxylysine. The Proton acceptor role is filled by histidine 288. 3 residues coordinate substrate: arginine 289, histidine 321, and serine 373.

This sequence belongs to the RuBisCO large chain family. Type I subfamily. In terms of assembly, heterohexadecamer of 8 large chains and 8 small chains; disulfide-linked. The disulfide link is formed within the large subunit homodimers. Mg(2+) serves as cofactor. Post-translationally, the disulfide bond which can form in the large chain dimeric partners within the hexadecamer appears to be associated with oxidative stress and protein turnover.

Its subcellular location is the plastid. It localises to the chloroplast. The catalysed reaction is 2 (2R)-3-phosphoglycerate + 2 H(+) = D-ribulose 1,5-bisphosphate + CO2 + H2O. It catalyses the reaction D-ribulose 1,5-bisphosphate + O2 = 2-phosphoglycolate + (2R)-3-phosphoglycerate + 2 H(+). Functionally, ruBisCO catalyzes two reactions: the carboxylation of D-ribulose 1,5-bisphosphate, the primary event in carbon dioxide fixation, as well as the oxidative fragmentation of the pentose substrate in the photorespiration process. Both reactions occur simultaneously and in competition at the same active site. This Persicaria senticosa (Knotweed) protein is Ribulose bisphosphate carboxylase large chain.